The primary structure comprises 285 residues: Eukaryotic translation initiation factor 3 subunit F-2 (285 aa).

The MPN domain maps to 11–145 (VVLQPLVLFQ…TRLYCGVEMG (135 aa)).

It belongs to the eIF-3 subunit F family. As to quaternary structure, component of the eukaryotic translation initiation factor 3 (eIF-3) complex. The eIF-3 complex interacts with pix.

It localises to the cytoplasm. In terms of biological role, component of the eukaryotic translation initiation factor 3 (eIF-3) complex, which is involved in protein synthesis of a specialized repertoire of mRNAs and, together with other initiation factors, stimulates binding of mRNA and methionyl-tRNAi to the 40S ribosome. The eIF-3 complex specifically targets and initiates translation of a subset of mRNAs involved in cell proliferation. In Drosophila ananassae (Fruit fly), this protein is Eukaryotic translation initiation factor 3 subunit F-2.